The primary structure comprises 283 residues: Elongation factor Ts (283 aa).

Positions Thr79 to Val82 are involved in Mg(2+) ion dislocation from EF-Tu.

Belongs to the EF-Ts family.

The protein resides in the cytoplasm. Associates with the EF-Tu.GDP complex and induces the exchange of GDP to GTP. It remains bound to the aminoacyl-tRNA.EF-Tu.GTP complex up to the GTP hydrolysis stage on the ribosome. This is Elongation factor Ts from Shewanella oneidensis (strain ATCC 700550 / JCM 31522 / CIP 106686 / LMG 19005 / NCIMB 14063 / MR-1).